The following is a 198-amino-acid chain: Ribonuclease HII (198 aa).

The region spanning 1-198 is the RNase H type-2 domain; that stretch reads MLCGIDEAGR…QRRSFFVKNL (198 aa). Residues Asp-6, Glu-7, and Asp-112 each coordinate a divalent metal cation.

The protein belongs to the RNase HII family. The cofactor is Mn(2+). Requires Mg(2+) as cofactor.

It localises to the cytoplasm. The catalysed reaction is Endonucleolytic cleavage to 5'-phosphomonoester.. Endonuclease that specifically degrades the RNA of RNA-DNA hybrids. This chain is Ribonuclease HII, found in Treponema denticola (strain ATCC 35405 / DSM 14222 / CIP 103919 / JCM 8153 / KCTC 15104).